Reading from the N-terminus, the 176-residue chain is Peptide deformylase 1 (176 aa).

2 residues coordinate Fe cation: C99 and H141. Residue E142 is part of the active site. H145 provides a ligand contact to Fe cation.

The protein belongs to the polypeptide deformylase family. It depends on Fe(2+) as a cofactor.

It carries out the reaction N-terminal N-formyl-L-methionyl-[peptide] + H2O = N-terminal L-methionyl-[peptide] + formate. In terms of biological role, removes the formyl group from the N-terminal Met of newly synthesized proteins. Requires at least a dipeptide for an efficient rate of reaction. N-terminal L-methionine is a prerequisite for activity but the enzyme has broad specificity at other positions. In Nitrosomonas europaea (strain ATCC 19718 / CIP 103999 / KCTC 2705 / NBRC 14298), this protein is Peptide deformylase 1.